The primary structure comprises 409 residues: Elongation factor Tu (409 aa).

Positions 10 to 214 constitute a tr-type G domain; it reads KPHVNIGTIG…EVDAYIPTPE (205 aa). Positions 19 to 26 are G1; the sequence is GHVDHGKT. 19–26 is a binding site for GTP; the sequence is GHVDHGKT. T26 contributes to the Mg(2+) binding site. The tract at residues 60 to 64 is G2; it reads GITIN. A G3 region spans residues 81–84; sequence DCPG. Residues 81–85 and 136–139 contribute to the GTP site; these read DCPGH and NKQD. The G4 stretch occupies residues 136-139; sequence NKQD. Residues 174–176 form a G5 region; that stretch reads SAL.

It belongs to the TRAFAC class translation factor GTPase superfamily. Classic translation factor GTPase family. EF-Tu/EF-1A subfamily. In terms of assembly, monomer.

Its subcellular location is the cytoplasm. It catalyses the reaction GTP + H2O = GDP + phosphate + H(+). GTP hydrolase that promotes the GTP-dependent binding of aminoacyl-tRNA to the A-site of ribosomes during protein biosynthesis. This chain is Elongation factor Tu, found in Acaryochloris marina (strain MBIC 11017).